We begin with the raw amino-acid sequence, 240 residues long: Probable septum site-determining protein MinC (240 aa).

This sequence belongs to the MinC family. Interacts with MinD and FtsZ.

Cell division inhibitor that blocks the formation of polar Z ring septums. Rapidly oscillates between the poles of the cell to destabilize FtsZ filaments that have formed before they mature into polar Z rings. Prevents FtsZ polymerization. This chain is Probable septum site-determining protein MinC, found in Acinetobacter baumannii (strain ACICU).